Here is a 67-residue protein sequence, read N- to C-terminus: Large ribosomal subunit protein uL29 (67 aa).

The protein belongs to the universal ribosomal protein uL29 family.

This Acetivibrio thermocellus (strain ATCC 27405 / DSM 1237 / JCM 9322 / NBRC 103400 / NCIMB 10682 / NRRL B-4536 / VPI 7372) (Clostridium thermocellum) protein is Large ribosomal subunit protein uL29.